Consider the following 340-residue polypeptide: 4-hydroxythreonine-4-phosphate dehydrogenase (340 aa).

2 residues coordinate substrate: His-141 and Thr-142. A divalent metal cation-binding residues include His-171, His-216, and His-271. Substrate-binding residues include Lys-279, Asn-288, and Arg-297.

The protein belongs to the PdxA family. As to quaternary structure, homodimer. It depends on Zn(2+) as a cofactor. The cofactor is Mg(2+). Requires Co(2+) as cofactor.

It is found in the cytoplasm. The catalysed reaction is 4-(phosphooxy)-L-threonine + NAD(+) = 3-amino-2-oxopropyl phosphate + CO2 + NADH. The protein operates within cofactor biosynthesis; pyridoxine 5'-phosphate biosynthesis; pyridoxine 5'-phosphate from D-erythrose 4-phosphate: step 4/5. Functionally, catalyzes the NAD(P)-dependent oxidation of 4-(phosphooxy)-L-threonine (HTP) into 2-amino-3-oxo-4-(phosphooxy)butyric acid which spontaneously decarboxylates to form 3-amino-2-oxopropyl phosphate (AHAP). The chain is 4-hydroxythreonine-4-phosphate dehydrogenase from Desulforapulum autotrophicum (strain ATCC 43914 / DSM 3382 / VKM B-1955 / HRM2) (Desulfobacterium autotrophicum).